The following is a 210-amino-acid chain: ATP-dependent Clp protease proteolytic subunit (210 aa).

Ser114 functions as the Nucleophile in the catalytic mechanism. Residue His139 is part of the active site.

This sequence belongs to the peptidase S14 family. Fourteen ClpP subunits assemble into 2 heptameric rings which stack back to back to give a disk-like structure with a central cavity, resembling the structure of eukaryotic proteasomes.

The protein localises to the cytoplasm. It catalyses the reaction Hydrolysis of proteins to small peptides in the presence of ATP and magnesium. alpha-casein is the usual test substrate. In the absence of ATP, only oligopeptides shorter than five residues are hydrolyzed (such as succinyl-Leu-Tyr-|-NHMec, and Leu-Tyr-Leu-|-Tyr-Trp, in which cleavage of the -Tyr-|-Leu- and -Tyr-|-Trp bonds also occurs).. Functionally, cleaves peptides in various proteins in a process that requires ATP hydrolysis. Has a chymotrypsin-like activity. Plays a major role in the degradation of misfolded proteins. The protein is ATP-dependent Clp protease proteolytic subunit of Janthinobacterium sp. (strain Marseille) (Minibacterium massiliensis).